The primary structure comprises 430 residues: Asparagine--tRNA ligase (430 aa).

This sequence belongs to the class-II aminoacyl-tRNA synthetase family. In terms of assembly, homodimer.

The protein localises to the cytoplasm. It catalyses the reaction tRNA(Asn) + L-asparagine + ATP = L-asparaginyl-tRNA(Asn) + AMP + diphosphate + H(+). The polypeptide is Asparagine--tRNA ligase (Listeria innocua serovar 6a (strain ATCC BAA-680 / CLIP 11262)).